The primary structure comprises 299 residues: Delta-9 desaturase-like 1 protein (299 aa).

A run of 2 helical transmembrane segments spans residues 31-51 and 55-75; these read IDIA…LAPF and WEAL…ITFS. Positions 77-82 match the Histidine box-1 motif; that stretch reads HRNLTH. The short motif at 114–118 is the Histidine box-2 element; sequence HRFHH. Helical transmembrane passes span 174–194 and 198–218; these read IGLH…LPYL and VGVG…ACHI. The short motif at 246 to 250 is the Histidine box-3 element; the sequence is HNNHH. A helical membrane pass occupies residues 262-282; the sequence is WYQVDLTWYLICFFQALGLAT.

The protein belongs to the fatty acid desaturase type 1 family. Fe cation serves as cofactor.

Its subcellular location is the endoplasmic reticulum membrane. Its pathway is lipid metabolism; polyunsaturated fatty acid biosynthesis. The chain is Delta-9 desaturase-like 1 protein from Arabidopsis thaliana (Mouse-ear cress).